Here is a 493-residue protein sequence, read N- to C-terminus: V-type proton ATPase subunit B (493 aa).

Belongs to the ATPase alpha/beta chains family. V-ATPase is a heteromultimeric enzyme composed of a peripheral catalytic V1 complex (main components: subunits A, B, C, D, E, and F) attached to an integral membrane V0 proton pore complex (main component: the proteolipid protein).

The protein resides in the cytoplasmic vesicle membrane. It localises to the endosome membrane. It is found in the contractile vacuole membrane. In terms of biological role, vacuolar ATPase is responsible for acidifying a variety of intracellular compartments in eukaryotic cells. The B subunit is non-catalytic but combines with other subunits to form the catalytic complex. V-ATPase is responsible for energizing electrophoretic K(+)/2H(+) antiport by generating a transmembrane voltage of more than 200 mV. This chain is V-type proton ATPase subunit B (vatB), found in Dictyostelium discoideum (Social amoeba).